Consider the following 185-residue polypeptide: Ribosome-recycling factor (185 aa).

Belongs to the RRF family.

It is found in the cytoplasm. Functionally, responsible for the release of ribosomes from messenger RNA at the termination of protein biosynthesis. May increase the efficiency of translation by recycling ribosomes from one round of translation to another. This chain is Ribosome-recycling factor, found in Roseiflexus sp. (strain RS-1).